The primary structure comprises 51 residues: Insulin (51 aa).

Intrachain disulfides connect C8–C37, C20–C50, and C36–C41.

The protein belongs to the insulin family. Heterodimer of a B chain and an A chain linked by two disulfide bonds.

It is found in the secreted. Insulin decreases blood glucose concentration. It increases cell permeability to monosaccharides, amino acids and fatty acids. It accelerates glycolysis, the pentose phosphate cycle, and glycogen synthesis in liver. This Seriola quinqueradiata (Five-ray yellowtail) protein is Insulin.